The following is a 759-amino-acid chain: Fidgetin (759 aa).

Disordered stretches follow at residues 89 to 111 (SNYS…PWQP), 200 to 237 (SQAT…PGYN), 258 to 293 (VGSG…VPGY), and 337 to 429 (SYGQ…VMSE). Pro residues-rich tracts occupy residues 221–232 (QPPPPPPPPPAL) and 266–289 (GAPP…PPTT). 2 stretches are compositionally biased toward polar residues: residues 337–347 (SYGQQRSTQSP) and 382–418 (LMPS…SSES). A Phosphothreonine modification is found at threonine 400. ATP contacts are provided by residues alanine 489 and 529–534 (GTGKTL).

The protein belongs to the AAA ATPase family. Interacts with AKAP8 (via C-terminus). Widely expressed.

It is found in the nucleus matrix. The protein resides in the cytoplasm. Its subcellular location is the cytoskeleton. The protein localises to the microtubule organizing center. It localises to the centrosome. In terms of biological role, ATP-dependent microtubule severing protein. Severs microtubules along their length and depolymerizes their ends, primarily the minus-end, suppressing microtubule growth from and attachment to centrosomes. Microtubule severing may promote rapid reorganization of cellular microtubule arrays and the release of microtubules from the centrosome following nucleation. Microtubule release from the mitotic spindle poles may allow depolymerization of the microtubule end proximal to the spindle pole, leading to poleward microtubule flux and poleward motion of chromosome. The sequence is that of Fidgetin (Fign) from Mus musculus (Mouse).